The following is a 176-amino-acid chain: ATP synthase subunit b (176 aa).

Residues 18 to 38 (GVEWGTVIVTVITFAILLALL) traverse the membrane as a helical segment.

Belongs to the ATPase B chain family. F-type ATPases have 2 components, F(1) - the catalytic core - and F(0) - the membrane proton channel. F(1) has five subunits: alpha(3), beta(3), gamma(1), delta(1), epsilon(1). F(0) has three main subunits: a(1), b(2) and c(10-14). The alpha and beta chains form an alternating ring which encloses part of the gamma chain. F(1) is attached to F(0) by a central stalk formed by the gamma and epsilon chains, while a peripheral stalk is formed by the delta and b chains.

The protein localises to the cell membrane. F(1)F(0) ATP synthase produces ATP from ADP in the presence of a proton or sodium gradient. F-type ATPases consist of two structural domains, F(1) containing the extramembraneous catalytic core and F(0) containing the membrane proton channel, linked together by a central stalk and a peripheral stalk. During catalysis, ATP synthesis in the catalytic domain of F(1) is coupled via a rotary mechanism of the central stalk subunits to proton translocation. Its function is as follows. Component of the F(0) channel, it forms part of the peripheral stalk, linking F(1) to F(0). In Staphylococcus haemolyticus (strain JCSC1435), this protein is ATP synthase subunit b.